The sequence spans 405 residues: Arginine biosynthesis bifunctional protein ArgJ (405 aa).

6 residues coordinate substrate: Thr-152, Lys-178, Thr-189, Glu-276, Asn-400, and Thr-405. Catalysis depends on Thr-189, which acts as the Nucleophile.

This sequence belongs to the ArgJ family. Heterotetramer of two alpha and two beta chains.

Its subcellular location is the cytoplasm. It carries out the reaction N(2)-acetyl-L-ornithine + L-glutamate = N-acetyl-L-glutamate + L-ornithine. The catalysed reaction is L-glutamate + acetyl-CoA = N-acetyl-L-glutamate + CoA + H(+). The protein operates within amino-acid biosynthesis; L-arginine biosynthesis; L-ornithine and N-acetyl-L-glutamate from L-glutamate and N(2)-acetyl-L-ornithine (cyclic): step 1/1. It functions in the pathway amino-acid biosynthesis; L-arginine biosynthesis; N(2)-acetyl-L-ornithine from L-glutamate: step 1/4. Its function is as follows. Catalyzes two activities which are involved in the cyclic version of arginine biosynthesis: the synthesis of N-acetylglutamate from glutamate and acetyl-CoA as the acetyl donor, and of ornithine by transacetylation between N(2)-acetylornithine and glutamate. The polypeptide is Arginine biosynthesis bifunctional protein ArgJ (Pseudomonas savastanoi pv. phaseolicola (strain 1448A / Race 6) (Pseudomonas syringae pv. phaseolicola (strain 1448A / Race 6))).